The primary structure comprises 743 residues: Phosphoribosylformylglycinamidine synthase subunit PurL (743 aa).

H50 is an active-site residue. Residues Y53 and K92 each contribute to the ATP site. Position 94 (E94) interacts with Mg(2+). Residues 95-98 (SHNH) and R117 contribute to the substrate site. H96 (proton acceptor) is an active-site residue. D118 contacts Mg(2+). Q241 contributes to the substrate binding site. D269 provides a ligand contact to Mg(2+). 313-315 (ESQ) serves as a coordination point for substrate. Residues D494 and G531 each contribute to the ATP site. Mg(2+) is bound at residue N532. Residue S534 coordinates substrate.

The protein belongs to the FGAMS family. Monomer. Part of the FGAM synthase complex composed of 1 PurL, 1 PurQ and 2 PurS subunits.

Its subcellular location is the cytoplasm. The catalysed reaction is N(2)-formyl-N(1)-(5-phospho-beta-D-ribosyl)glycinamide + L-glutamine + ATP + H2O = 2-formamido-N(1)-(5-O-phospho-beta-D-ribosyl)acetamidine + L-glutamate + ADP + phosphate + H(+). It functions in the pathway purine metabolism; IMP biosynthesis via de novo pathway; 5-amino-1-(5-phospho-D-ribosyl)imidazole from N(2)-formyl-N(1)-(5-phospho-D-ribosyl)glycinamide: step 1/2. In terms of biological role, part of the phosphoribosylformylglycinamidine synthase complex involved in the purines biosynthetic pathway. Catalyzes the ATP-dependent conversion of formylglycinamide ribonucleotide (FGAR) and glutamine to yield formylglycinamidine ribonucleotide (FGAM) and glutamate. The FGAM synthase complex is composed of three subunits. PurQ produces an ammonia molecule by converting glutamine to glutamate. PurL transfers the ammonia molecule to FGAR to form FGAM in an ATP-dependent manner. PurS interacts with PurQ and PurL and is thought to assist in the transfer of the ammonia molecule from PurQ to PurL. This is Phosphoribosylformylglycinamidine synthase subunit PurL from Sinorhizobium medicae (strain WSM419) (Ensifer medicae).